We begin with the raw amino-acid sequence, 309 residues long: (S)-sulfolactate dehydrogenase (309 aa).

Residues 151-152 (GI), D171, 231-233 (TAR), and D257 contribute to the NAD(+) site. The active site involves R233. E262 is a catalytic residue. H281 acts as the Proton donor in catalysis. 281–284 (HIAG) contributes to the NAD(+) binding site.

This sequence belongs to the D-isomer specific 2-hydroxyacid dehydrogenase family.

The enzyme catalyses (2S)-3-sulfolactate + NAD(+) = 3-sulfopyruvate + NADH + H(+). Functionally, dehydrogenase of the (R,S)-sulfolactate degradation pathway that only acts on the (S)-enantiomer of 3-sulfolactate. Together with ComC, provides a racemase system that converts (2S)-3-sulfolactate to (2R)-3-sulfolactate, which is degraded further by (2R)-sulfolactate sulfo-lyase. Specific for NAD. Also able to form sulfolactate from sulfopyruvate. This chain is (S)-sulfolactate dehydrogenase (slcC), found in Chromohalobacter salexigens (strain ATCC BAA-138 / DSM 3043 / CIP 106854 / NCIMB 13768 / 1H11).